The primary structure comprises 69 residues: Small, acid-soluble spore protein I (69 aa).

This sequence belongs to the SspI family.

Its subcellular location is the spore core. The polypeptide is Small, acid-soluble spore protein I (Shouchella clausii (strain KSM-K16) (Alkalihalobacillus clausii)).